Consider the following 345-residue polypeptide: GTPase Obg (345 aa).

One can recognise an Obg domain in the interval 1 to 159; sequence MKFIDEAIIK…RTLRLELKLL (159 aa). Residues 127–148 are disordered; the sequence is NARFKSSTNRAPRKTTQGKPGE. Residues 130 to 144 show a composition bias toward polar residues; sequence FKSSTNRAPRKTTQG. The region spanning 160-334 is the OBG-type G domain; the sequence is ADVGLLGLPN…LIHAVMQYLE (175 aa). Residues 166 to 173, 191 to 195, 213 to 216, 284 to 287, and 315 to 317 contribute to the GTP site; these read GLPNAGKS, FTTLH, DIPG, NKTD, and SAL. 2 residues coordinate Mg(2+): Ser173 and Thr193.

The protein belongs to the TRAFAC class OBG-HflX-like GTPase superfamily. OBG GTPase family. Monomer. Requires Mg(2+) as cofactor.

It localises to the cytoplasm. In terms of biological role, an essential GTPase which binds GTP, GDP and possibly (p)ppGpp with moderate affinity, with high nucleotide exchange rates and a fairly low GTP hydrolysis rate. Plays a role in control of the cell cycle, stress response, ribosome biogenesis and in those bacteria that undergo differentiation, in morphogenesis control. This chain is GTPase Obg, found in Nitrosococcus oceani (strain ATCC 19707 / BCRC 17464 / JCM 30415 / NCIMB 11848 / C-107).